We begin with the raw amino-acid sequence, 119 residues long: Putative phosphoethanolamine transferase YjgX (119 aa).

The next 2 membrane-spanning stretches (helical) occupy residues 5-25 (VFPVYHFLVSAAILVFVVIFW) and 94-114 (LLLSLVRVCAGIICQCMTIPY).

This sequence belongs to the phosphoethanolamine transferase family.

Its subcellular location is the cell inner membrane. This is Putative phosphoethanolamine transferase YjgX (yjgX) from Escherichia coli (strain K12).